Consider the following 111-residue polypeptide: 2Fe-2S ferredoxin (111 aa).

The 104-residue stretch at 1–104 folds into the 2Fe-2S ferredoxin-type domain; it reads MPKIFFLPHK…DIEVQIPLYN (104 aa). Residues Cys42, Cys48, Cys51, and Cys87 each coordinate [2Fe-2S] cluster.

Belongs to the adrenodoxin/putidaredoxin family. It depends on [2Fe-2S] cluster as a cofactor.

Its function is as follows. Ferredoxin are iron-sulfur proteins that transfer electrons in a wide variety of metabolic reactions. The polypeptide is 2Fe-2S ferredoxin (fdx) (Buchnera aphidicola subsp. Schizaphis graminum (strain Sg)).